Here is an 80-residue protein sequence, read N- to C-terminus: Conotoxin ArMKLT2-0321 (80 aa).

The first 21 residues, 1 to 21 (MKLTCVLIIAMLFLIVCQLNT), serve as a signal peptide directing secretion. The propeptide occupies 22 to 48 (ADDSTDKQEYRAVKLRDAMRNFKGSKR). Cystine bridges form between Cys-50/Cys-63, Cys-57/Cys-68, and Cys-62/Cys-77.

This sequence belongs to the conotoxin O1 superfamily. As to expression, expressed by the venom duct.

It is found in the secreted. The sequence is that of Conotoxin ArMKLT2-0321 from Conus arenatus (Sand-dusted cone).